The chain runs to 1323 residues: DNA-directed RNA polymerase subunit beta' (1323 aa).

C60, C62, C75, and C78 together coordinate Zn(2+). Mg(2+) contacts are provided by D535, D537, and D539. The Zn(2+) site is built by C894, C977, C984, and C987.

This sequence belongs to the RNA polymerase beta' chain family. As to quaternary structure, the RNAP catalytic core consists of 2 alpha, 1 beta, 1 beta' and 1 omega subunit. When a sigma factor is associated with the core the holoenzyme is formed, which can initiate transcription. Mg(2+) is required as a cofactor. It depends on Zn(2+) as a cofactor.

The enzyme catalyses RNA(n) + a ribonucleoside 5'-triphosphate = RNA(n+1) + diphosphate. Its function is as follows. DNA-dependent RNA polymerase catalyzes the transcription of DNA into RNA using the four ribonucleoside triphosphates as substrates. This Corynebacterium jeikeium (strain K411) protein is DNA-directed RNA polymerase subunit beta'.